The following is a 56-amino-acid chain: Large ribosomal subunit protein bL32c (56 aa).

It belongs to the bacterial ribosomal protein bL32 family.

The protein localises to the plastid. It is found in the chloroplast. The sequence is that of Large ribosomal subunit protein bL32c from Platanus occidentalis (Sycamore).